Consider the following 102-residue polypeptide: Co-chaperonin GroES (102 aa).

This sequence belongs to the GroES chaperonin family. As to quaternary structure, heptamer of 7 subunits arranged in a ring. Interacts with the chaperonin GroEL.

Its subcellular location is the cytoplasm. Functionally, together with the chaperonin GroEL, plays an essential role in assisting protein folding. The GroEL-GroES system forms a nano-cage that allows encapsulation of the non-native substrate proteins and provides a physical environment optimized to promote and accelerate protein folding. GroES binds to the apical surface of the GroEL ring, thereby capping the opening of the GroEL channel. This Streptomyces coelicolor (strain ATCC BAA-471 / A3(2) / M145) protein is Co-chaperonin GroES.